The primary structure comprises 187 residues: Dihydrofolate reductase (187 aa).

The DHFR domain maps to 4-185; that stretch reads PLNCIVAVSQ…IKYKFEVYEK (182 aa). NADP(+) contacts are provided by residues alanine 10 and 16–22; that span reads GIGKNGD. Residue 31–36 participates in substrate binding; it reads EFKYFQ. N6-acetyllysine; alternate is present on lysine 33. The residue at position 33 (lysine 33) is an N6-succinyllysine; alternate. 55-57 contributes to the NADP(+) binding site; it reads RKT. Arginine 71 is a substrate binding site. NADP(+) contacts are provided by residues 77–79 and 117–124; these read SRE and GGSSVYQE.

The protein belongs to the dihydrofolate reductase family. As to quaternary structure, homodimer.

Its subcellular location is the mitochondrion. It localises to the cytoplasm. It carries out the reaction (6S)-5,6,7,8-tetrahydrofolate + NADP(+) = 7,8-dihydrofolate + NADPH + H(+). The protein operates within cofactor biosynthesis; tetrahydrofolate biosynthesis; 5,6,7,8-tetrahydrofolate from 7,8-dihydrofolate: step 1/1. Functionally, key enzyme in folate metabolism. Contributes to the de novo mitochondrial thymidylate biosynthesis pathway. Catalyzes an essential reaction for de novo glycine and purine synthesis, and for DNA precursor synthesis. Binds its own mRNA. This Rattus norvegicus (Rat) protein is Dihydrofolate reductase (Dhfr).